The sequence spans 130 residues: Small ribosomal subunit protein uS9 (130 aa).

It belongs to the universal ribosomal protein uS9 family.

The polypeptide is Small ribosomal subunit protein uS9 (Pectobacterium carotovorum subsp. carotovorum (strain PC1)).